A 1657-amino-acid chain; its full sequence is Putative serine/threonine-protein kinase/receptor R826 (1657 aa).

An N-terminal signal peptide occupies residues 1–23 (MRLNSQIVFCIVVVISCLSMIEC). Asn153, Asn178, Asn238, Asn255, Asn352, Asn454, Asn476, Asn494, and Asn596 each carry an N-linked (GlcNAc...) asparagine; by host glycan. The chain crosses the membrane as a helical span at residues 742-762 (IILAVVIPIAFIIVCIICILV). Positions 786–1049 (LELGEQLGTG…EIMTRLSNLM (264 aa)) constitute a Protein kinase 1 domain. ATP contacts are provided by residues 792–800 (LGTGAFGEV) and Lys813. Asp909 acts as the Proton acceptor in catalysis. The interval 1089–1115 (VQNSYNRTDSYDLGSNNSHSSITSDTN) is disordered. Residues 1134-1277 (VVVFTDIISA…PTVTTAAAVT (144 aa)) form the Guanylate cyclase domain. A Protein kinase 2 domain is found at 1399–1651 (IKMGEQIGLG…DDVIIVLAKF (253 aa)). ATP-binding positions include 1405 to 1413 (IGLGSYGVV) and Lys1426. Asp1522 serves as the catalytic Proton acceptor.

The protein resides in the membrane. It carries out the reaction L-seryl-[protein] + ATP = O-phospho-L-seryl-[protein] + ADP + H(+). The catalysed reaction is L-threonyl-[protein] + ATP = O-phospho-L-threonyl-[protein] + ADP + H(+). The chain is Putative serine/threonine-protein kinase/receptor R826 from Acanthamoeba polyphaga mimivirus (APMV).